The chain runs to 334 residues: Thiamine thiazole synthase (334 aa).

Residues cysteine 86, glutamate 107–alanine 108, glycine 115, and valine 183 contribute to the substrate site. At cysteine 221 the chain carries 2,3-didehydroalanine (Cys). Residues aspartate 223, histidine 238, methionine 290, and arginine 300–glycine 302 contribute to the substrate site.

This sequence belongs to the THI4 family. Homooctamer. Requires Fe cation as cofactor. Post-translationally, during the catalytic reaction, a sulfide is transferred from Cys-221 to a reaction intermediate, generating a dehydroalanine residue.

It localises to the cytoplasm. The protein resides in the nucleus. The catalysed reaction is [ADP-thiazole synthase]-L-cysteine + glycine + NAD(+) = [ADP-thiazole synthase]-dehydroalanine + ADP-5-ethyl-4-methylthiazole-2-carboxylate + nicotinamide + 3 H2O + 2 H(+). Functionally, involved in biosynthesis of the thiamine precursor thiazole. Catalyzes the conversion of NAD and glycine to adenosine diphosphate 5-(2-hydroxyethyl)-4-methylthiazole-2-carboxylic acid (ADT), an adenylated thiazole intermediate. The reaction includes an iron-dependent sulfide transfer from a conserved cysteine residue of the protein to a thiazole intermediate. The enzyme can only undergo a single turnover, which suggests it is a suicide enzyme. May have additional roles in adaptation to various stress conditions and in DNA damage tolerance. The chain is Thiamine thiazole synthase from Ajellomyces capsulatus (strain G186AR / H82 / ATCC MYA-2454 / RMSCC 2432) (Darling's disease fungus).